The primary structure comprises 347 residues: Selenide, water dikinase (347 aa).

Cys-17 is an active-site residue. ATP contacts are provided by residues Lys-20 and 48-50 (TRD). Asp-51 lines the Mg(2+) pocket. Residues Asp-68, Asp-91, and 139 to 141 (GHS) each bind ATP. Mg(2+) is bound at residue Asp-91. Mg(2+) is bound at residue Asp-227.

This sequence belongs to the selenophosphate synthase 1 family. Class I subfamily. In terms of assembly, homodimer. The cofactor is Mg(2+).

It carries out the reaction hydrogenselenide + ATP + H2O = selenophosphate + AMP + phosphate + 2 H(+). Synthesizes selenophosphate from selenide and ATP. The chain is Selenide, water dikinase from Escherichia coli O9:H4 (strain HS).